The chain runs to 102 residues: Large ribosomal subunit protein bL21 (102 aa).

This sequence belongs to the bacterial ribosomal protein bL21 family. As to quaternary structure, part of the 50S ribosomal subunit. Contacts protein L20.

In terms of biological role, this protein binds to 23S rRNA in the presence of protein L20. This Lachnoclostridium phytofermentans (strain ATCC 700394 / DSM 18823 / ISDg) (Clostridium phytofermentans) protein is Large ribosomal subunit protein bL21.